The sequence spans 228 residues: PKHD-type hydroxylase Vapar_1809 (228 aa).

A Fe2OG dioxygenase domain is found at Gln-78 to Ser-179. Positions 97, 99, and 160 each coordinate Fe cation. Residue Arg-170 participates in 2-oxoglutarate binding.

It depends on Fe(2+) as a cofactor. L-ascorbate serves as cofactor.

This is PKHD-type hydroxylase Vapar_1809 from Variovorax paradoxus (strain S110).